The sequence spans 248 residues: Homeobox-leucine zipper protein HOX15 (248 aa).

The interval 1-44 (MAQDDEDVGLALGLSLGSGGHRRQRESRDEAPSSAAASLLTLRL) is disordered. A compositionally biased stretch (low complexity) spans 32–44 (PSSAAASLLTLRL). The homeobox DNA-binding region spans 91-150 (NSRKKLRLSKEQSALLEDRFKEHSTLNPKQKVALAKQLNLRPRQVEVWFQNRRARTKLKQ). The tract at residues 149-193 (KQTEVDCELLKRCCETLTEENRRLHRELQQLRALTHSTAAGFFMA) is leucine-zipper. Positions 223 to 248 (PTAAADRTNKPTAPHLFSPFAKSAAC) are disordered.

This sequence belongs to the HD-ZIP homeobox family. Class II subfamily. Expressed in seedlings, stems, leaf blades and panicles.

The protein resides in the nucleus. In terms of biological role, probable transcription factor. In Oryza sativa subsp. indica (Rice), this protein is Homeobox-leucine zipper protein HOX15 (HOX15).